We begin with the raw amino-acid sequence, 501 residues long: Aldehyde dehydrogenase mpl4 (501 aa).

231–236 (GSTASG) serves as a coordination point for NAD(+). Active-site residues include E253 and C287.

It belongs to the aldehyde dehydrogenase family.

It catalyses the reaction an aldehyde + NAD(+) + H2O = a carboxylate + NADH + 2 H(+). The protein operates within mycotoxin biosynthesis. In terms of biological role, aldehyde dehydrogenase; part of the gene cluster that mediates the biosynthesis of the mycotoxin citrinin, a hepato-nephrotoxic compound to humans due to inhibition of respiration complex III. The pathway begins with the synthesis of a keto-aldehyde intermediate by the citrinin PKS (pksCT) from successive condensations of 4 malonyl-CoA units, presumably with a simple acetyl-CoA starter unit. Release of the keto-aldehyde intermediate is consistent with the presence of the C-terminal reductive release domain. Mp11 collaborates with pksCT by catalyzing the hydrolysis of ACP-bound acyl intermediates to free the ACP from stalled intermediates. Mpl2 then catalyzes the oxidation of the C-12 methyl of the ketone intermediate to an alcohol intermediate which is further oxidized by the oxidoreductase mpl7 to produce a bisaldehyde intermediate. The fourth catalytic step is catalyzed by the mpl4 aldehyde dehydrogenase. The final transformation is the reduction of C-3 by mpl6 to provide the chemically stable citrinin nucleus. This chain is Aldehyde dehydrogenase mpl4, found in Monascus purpureus (Red mold).